The chain runs to 218 residues: Thiopurine S-methyltransferase (218 aa).

4 residues coordinate S-adenosyl-L-methionine: tryptophan 10, leucine 45, glutamate 66, and arginine 123.

It belongs to the class I-like SAM-binding methyltransferase superfamily. TPMT family.

It is found in the cytoplasm. It catalyses the reaction S-adenosyl-L-methionine + a thiopurine = S-adenosyl-L-homocysteine + a thiopurine S-methylether.. The polypeptide is Thiopurine S-methyltransferase (Shewanella baltica (strain OS185)).